A 329-amino-acid chain; its full sequence is Arylacetonitrilase (329 aa).

The CN hydrolase domain occupies 6–279 (VRVAVTQAEP…EGIVYANLDM (274 aa)). The active-site Proton acceptor is the glutamate 46. The active site involves lysine 126. The Nucleophile role is filled by cysteine 161.

Belongs to the carbon-nitrogen hydrolase superfamily. Nitrilase family.

The catalysed reaction is a nitrile + 2 H2O = a carboxylate + NH4(+). It carries out the reaction 4-chlorophenylacetonitrile + 2 H2O = 4-chlorophenylacetate + NH4(+). Functionally, nitrilase that hydrolyzes preferentially phenylacetonitrile and heteroaromatic nitriles, but has significantly lower activity for (R,S)-mandelonitrile. Also acts on dinitriles like phenylenediacetonitriles (PDAs) 1,2-PDA, 1,3-PDA, and 1,4-PDA, and cyanophenyl acetonitriles (CPAs) 2-CPA and 4-CPA. This chain is Arylacetonitrilase, found in Hypocrea virens (strain Gv29-8 / FGSC 10586) (Gliocladium virens).